The following is a 549-amino-acid chain: Thermosome subunit (549 aa).

Basic and acidic residues predominate over residues 528 to 538; that stretch reads EKEKEGEKGGG. The segment at 528-549 is disordered; it reads EKEKEGEKGGGSEEFSGSSDLD. Residues 540-549 show a composition bias toward low complexity; the sequence is EEFSGSSDLD.

It belongs to the TCP-1 chaperonin family. Forms an oligomeric complex of eight-membered rings.

Molecular chaperone; binds unfolded polypeptides in vitro, and has a weak ATPase activity. The polypeptide is Thermosome subunit (ths) (Pyrococcus horikoshii (strain ATCC 700860 / DSM 12428 / JCM 9974 / NBRC 100139 / OT-3)).